The following is a 167-amino-acid chain: Large ribosomal subunit protein uL10 (167 aa).

Belongs to the universal ribosomal protein uL10 family. In terms of assembly, part of the ribosomal stalk of the 50S ribosomal subunit. The N-terminus interacts with L11 and the large rRNA to form the base of the stalk. The C-terminus forms an elongated spine to which L12 dimers bind in a sequential fashion forming a multimeric L10(L12)X complex.

Functionally, forms part of the ribosomal stalk, playing a central role in the interaction of the ribosome with GTP-bound translation factors. The sequence is that of Large ribosomal subunit protein uL10 from Yersinia enterocolitica serotype O:8 / biotype 1B (strain NCTC 13174 / 8081).